An 87-amino-acid chain; its full sequence is Venom serine protease inhibitor (87 aa).

The signal sequence occupies residues 1 to 23 (MPRLVLVSFLFLAIFSVFIGGFA). Disulfide bonds link C27–C61, C36–C57, C40–C53, C44–C81, and C63–C75. A TIL domain is found at 27–81 (CPRNEIFTRCHAACQPSCARLARKPFCIKICKPGCICTSGYLRNKNNVCVPRSRC).

Belongs to the serine protease inhibitor-like (TIL domain-containing) family. As to expression, specifically expressed by the venom gland.

Its subcellular location is the secreted. In terms of biological role, antifibrinolytic and antimicrobial serine protease inhibitor. Inhibits trypsin, plasmin and microbial serine proteases but not chymotrypsin, thrombin and elastase. Inhibits the plasmin-mediated degradation of fibrin to fibrin degradation products. Also binds to bacterial and fungal surfaces and exhibits antimicrobial activity against fungi as well as Gram-positive and Gram-negative bacteria. The chain is Venom serine protease inhibitor from Apis cerana (Indian honeybee).